The chain runs to 242 residues: Endoplasmic reticulum membrane protein complex subunit 7 (242 aa).

Residues 1–23 form the signal peptide; that stretch reads MAAALWGFFPVLLLLLLSGDVQS. Residues 24–159 lie on the Lumenal side of the membrane; it reads SEVPGAAAEG…IKRESWGWTD (136 aa). The chain crosses the membrane as a helical span at residues 160–180; the sequence is FLMNPMVMMMVLPLLIFVLLP. At 181–242 the chain is on the cytoplasmic side; sequence KVVNTSDPDM…TGKSGAGKRR (62 aa). A disordered region spans residues 217 to 242; that stretch reads LFSSKSSGKSSSGSSKTGKSGAGKRR. Positions 219 to 235 are enriched in low complexity; that stretch reads SSKSSGKSSSGSSKTGK.

It belongs to the EMC7 family. In terms of assembly, component of the ER membrane protein complex (EMC).

It localises to the endoplasmic reticulum membrane. Functionally, part of the endoplasmic reticulum membrane protein complex (EMC) that enables the energy-independent insertion into endoplasmic reticulum membranes of newly synthesized membrane proteins. Preferentially accommodates proteins with transmembrane domains that are weakly hydrophobic or contain destabilizing features such as charged and aromatic residues. Involved in the cotranslational insertion of multi-pass membrane proteins in which stop-transfer membrane-anchor sequences become ER membrane spanning helices. It is also required for the post-translational insertion of tail-anchored/TA proteins in endoplasmic reticulum membranes. By mediating the proper cotranslational insertion of N-terminal transmembrane domains in an N-exo topology, with translocated N-terminus in the lumen of the ER, controls the topology of multi-pass membrane proteins like the G protein-coupled receptors. By regulating the insertion of various proteins in membranes, it is indirectly involved in many cellular processes. The polypeptide is Endoplasmic reticulum membrane protein complex subunit 7 (EMC7) (Homo sapiens (Human)).